We begin with the raw amino-acid sequence, 214 residues long: MRPKTGQVGCETPEELGPGPRQRWPLLLLGLAMVAHGLLRPMVAPQSGDPDPGASVGSSRSSLRSLWGRLLLQPSPQRADPRCWPRGFWSEPQSLCYVFGTGTKVTVLGQPKANPTVTLFPPSSEELQANKATLVCLISDFYPGAVTVAWKADGSPVKAGVETTKPSKQSNNKYAASSYLSLTPEQWKSHRSYSCQVTHEGSTVEKTVAPTECS.

Positions 1–35 (MRPKTGQVGCETPEELGPGPRQRWPLLLLGLAMVA) are cleaved as a signal peptide. The tract at residues 98-109 (VFGTGTKVTVLG) is j region. The tract at residues 110-214 (QPKANPTVTL…EKTVAPTECS (105 aa)) is c region. In terms of domain architecture, Ig-like C1-type spans 115 to 209 (PTVTLFPPSS…EGSTVEKTVA (95 aa)). A disulfide bridge links C136 with C195.

Contrary to IGLL1, not expressed in pre-B-cells.

It is found in the secreted. This Homo sapiens (Human) protein is Immunoglobulin lambda-like polypeptide 5 (IGLL5).